The sequence spans 312 residues: Metaxin-1 homolog (312 aa).

The helical transmembrane segment at I282–I302 threads the bilayer.

Belongs to the metaxin family. Associates with the mitochondrial contact site and cristae organizing system (MICOS) complex (also known as MINOS or MitOS complex).

The protein resides in the mitochondrion outer membrane. In terms of biological role, involved in transport of proteins into the mitochondrion. Essential for embryonic development. The sequence is that of Metaxin-1 homolog from Caenorhabditis briggsae.